A 390-amino-acid polypeptide reads, in one-letter code: Chorismate synthase 2 (390 aa).

NADP(+) contacts are provided by Arg-39 and Arg-45. Residues 132–134 (RSS), 253–254 (NA), Gly-298, 313–317 (KPIPT), and Arg-339 contribute to the FMN site.

Belongs to the chorismate synthase family. As to quaternary structure, homotetramer. The cofactor is FMNH2.

It carries out the reaction 5-O-(1-carboxyvinyl)-3-phosphoshikimate = chorismate + phosphate. It functions in the pathway metabolic intermediate biosynthesis; chorismate biosynthesis; chorismate from D-erythrose 4-phosphate and phosphoenolpyruvate: step 7/7. Catalyzes the anti-1,4-elimination of the C-3 phosphate and the C-6 proR hydrogen from 5-enolpyruvylshikimate-3-phosphate (EPSP) to yield chorismate, which is the branch point compound that serves as the starting substrate for the three terminal pathways of aromatic amino acid biosynthesis. This reaction introduces a second double bond into the aromatic ring system. This is Chorismate synthase 2 from Bacillus cereus (strain ZK / E33L).